Here is a 161-residue protein sequence, read N- to C-terminus: Phosphopantetheine adenylyltransferase (161 aa).

Residue T10 participates in substrate binding. Residues T10–F11 and H18 each bind ATP. K42, M74, and R88 together coordinate substrate. Residues G89 to R91, E99, and W124 to S130 each bind ATP.

The protein belongs to the bacterial CoaD family. In terms of assembly, homohexamer. The cofactor is Mg(2+).

It localises to the cytoplasm. The enzyme catalyses (R)-4'-phosphopantetheine + ATP + H(+) = 3'-dephospho-CoA + diphosphate. Its pathway is cofactor biosynthesis; coenzyme A biosynthesis; CoA from (R)-pantothenate: step 4/5. Functionally, reversibly transfers an adenylyl group from ATP to 4'-phosphopantetheine, yielding dephospho-CoA (dPCoA) and pyrophosphate. The sequence is that of Phosphopantetheine adenylyltransferase from Edwardsiella ictaluri (strain 93-146).